Consider the following 408-residue polypeptide: F-box A protein 155 (408 aa).

The interval Met1–Lys22 is disordered.

The protein belongs to the FTH family.

The polypeptide is F-box A protein 155 (fbxa-155) (Caenorhabditis elegans).